The chain runs to 266 residues: Energy-coupling factor transporter transmembrane protein EcfT (266 aa).

The next 5 helical transmembrane spans lie at 32–52 (IIVV…AFTV), 71–91 (PLLW…PAGG), 107–127 (LINA…STLL), 152–172 (VPVD…PTLM), and 246–266 (DTVT…FRHW).

The protein belongs to the energy-coupling factor EcfT family. In terms of assembly, forms a stable energy-coupling factor (ECF) transporter complex composed of 2 membrane-embedded substrate-binding proteins (S component), 2 ATP-binding proteins (A component) and 2 transmembrane proteins (T component). May be able to interact with more than 1 S component at a time.

It is found in the cell membrane. Functionally, transmembrane (T) component of an energy-coupling factor (ECF) ABC-transporter complex. Unlike classic ABC transporters this ECF transporter provides the energy necessary to transport a number of different substrates. This Levilactobacillus brevis (strain ATCC 367 / BCRC 12310 / CIP 105137 / JCM 1170 / LMG 11437 / NCIMB 947 / NCTC 947) (Lactobacillus brevis) protein is Energy-coupling factor transporter transmembrane protein EcfT.